The primary structure comprises 163 residues: Large ribosomal subunit protein mL59 (163 aa).

A disordered region spans residues Pro33–Phe53.

The protein belongs to the mitochondrion-specific ribosomal protein mL59 family. As to quaternary structure, component of the mitochondrial large ribosomal subunit (mt-LSU). Mature N.crassa 74S mitochondrial ribosomes consist of a small (37S) and a large (54S) subunit. The 37S small subunit contains a 16S ribosomal RNA (16S mt-rRNA) and 32 different proteins. The 54S large subunit contains a 23S rRNA (23S mt-rRNA) and 42 different proteins.

It is found in the mitochondrion. Functionally, component of the mitochondrial ribosome (mitoribosome), a dedicated translation machinery responsible for the synthesis of mitochondrial genome-encoded proteins, including at least some of the essential transmembrane subunits of the mitochondrial respiratory chain. The mitoribosomes are attached to the mitochondrial inner membrane and translation products are cotranslationally integrated into the membrane. The protein is Large ribosomal subunit protein mL59 (mrpl25) of Neurospora crassa (strain ATCC 24698 / 74-OR23-1A / CBS 708.71 / DSM 1257 / FGSC 987).